Reading from the N-terminus, the 279-residue chain is Shikimate dehydrogenase (NADP(+)) (279 aa).

Residues 17–19 (SQS) and Thr-64 each bind shikimate. Lys-68 (proton acceptor) is an active-site residue. Positions 89 and 105 each coordinate shikimate. NADP(+) is bound by residues 130 to 134 (GAGGA) and Leu-218. Position 220 (Tyr-220) interacts with shikimate. Gly-242 lines the NADP(+) pocket.

This sequence belongs to the shikimate dehydrogenase family. Homodimer.

It catalyses the reaction shikimate + NADP(+) = 3-dehydroshikimate + NADPH + H(+). It participates in metabolic intermediate biosynthesis; chorismate biosynthesis; chorismate from D-erythrose 4-phosphate and phosphoenolpyruvate: step 4/7. In terms of biological role, involved in the biosynthesis of the chorismate, which leads to the biosynthesis of aromatic amino acids. Catalyzes the reversible NADPH linked reduction of 3-dehydroshikimate (DHSA) to yield shikimate (SA). This chain is Shikimate dehydrogenase (NADP(+)), found in Methylococcus capsulatus (strain ATCC 33009 / NCIMB 11132 / Bath).